Consider the following 156-residue polypeptide: ATP synthase subunit b (156 aa).

A helical transmembrane segment spans residues V12–A32.

Belongs to the ATPase B chain family. As to quaternary structure, F-type ATPases have 2 components, F(1) - the catalytic core - and F(0) - the membrane proton channel. F(1) has five subunits: alpha(3), beta(3), gamma(1), delta(1), epsilon(1). F(0) has three main subunits: a(1), b(2) and c(10-14). The alpha and beta chains form an alternating ring which encloses part of the gamma chain. F(1) is attached to F(0) by a central stalk formed by the gamma and epsilon chains, while a peripheral stalk is formed by the delta and b chains.

It localises to the cell inner membrane. Its function is as follows. F(1)F(0) ATP synthase produces ATP from ADP in the presence of a proton or sodium gradient. F-type ATPases consist of two structural domains, F(1) containing the extramembraneous catalytic core and F(0) containing the membrane proton channel, linked together by a central stalk and a peripheral stalk. During catalysis, ATP synthesis in the catalytic domain of F(1) is coupled via a rotary mechanism of the central stalk subunits to proton translocation. Functionally, component of the F(0) channel, it forms part of the peripheral stalk, linking F(1) to F(0). The protein is ATP synthase subunit b of Pseudomonas putida (strain ATCC 47054 / DSM 6125 / CFBP 8728 / NCIMB 11950 / KT2440).